The chain runs to 147 residues: Hemoglobin subunit epsilon (147 aa).

The Globin domain occupies 3 to 147 (HLTAEEKAAI…VAIALGHKYH (145 aa)). Serine 14 and serine 51 each carry phosphoserine. 2 residues coordinate heme b: histidine 64 and histidine 93.

The protein belongs to the globin family. As to quaternary structure, heterotetramer of two alpha chains and two epsilon chains in early embryonic hemoglobin Gower-2; two zeta chains and two epsilon chains in early embryonic hemoglobin Gower-1. Red blood cells.

The epsilon chain is a beta-type chain of early mammalian embryonic hemoglobin. The polypeptide is Hemoglobin subunit epsilon (HBE1) (Ateles belzebuth (White-bellied spider monkey)).